Consider the following 334-residue polypeptide: MTKVAINGFGRIGRLALRRILEVPGLEVVAINDLTDAKMLAHLFKYDSSQGRFNGEIEVKEGAFVVNGKEVKVFAEADPEKLPWGELGIDVVLECTGFFTKKEKAEAHVRAGAKKVVISAPAGNDLKTIVFNVNNEDLDGTETVISGASCTTNCLAPMAKVLNDKFGIEKGFMTTIHAYTNDQNTLDGPHRKGDFRRARAAAVSIIPNSTGAAKAIAQVIPELKGKLDGNAQRVPVPTGSVTELISVLKKNVTVEEINAAMKEAANESFGYTEDEIVSADVVGISYGSLFDATLTKIVDVDGSQLVKTVSWYDNEMSYTSQLVRTLEYFAKIAK.

Residues 11–12, Asp-33, and Ser-119 contribute to the NAD(+) site; that span reads RI. Residues 149-151 and Thr-180 contribute to the D-glyceraldehyde 3-phosphate site; that span reads SCT. Cys-150 acts as the Nucleophile in catalysis. Asn-181 is an NAD(+) binding site. D-glyceraldehyde 3-phosphate-binding positions include Arg-197, 210–211, and Arg-233; that span reads TG. Asn-314 contributes to the NAD(+) binding site.

It belongs to the glyceraldehyde-3-phosphate dehydrogenase family. In terms of assembly, homotetramer.

Its subcellular location is the cytoplasm. It carries out the reaction D-glyceraldehyde 3-phosphate + phosphate + NAD(+) = (2R)-3-phospho-glyceroyl phosphate + NADH + H(+). Its pathway is carbohydrate degradation; glycolysis; pyruvate from D-glyceraldehyde 3-phosphate: step 1/5. Its function is as follows. Catalyzes the oxidative phosphorylation of glyceraldehyde 3-phosphate (G3P) to 1,3-bisphosphoglycerate (BPG) using the cofactor NAD. The first reaction step involves the formation of a hemiacetal intermediate between G3P and a cysteine residue, and this hemiacetal intermediate is then oxidized to a thioester, with concomitant reduction of NAD to NADH. The reduced NADH is then exchanged with the second NAD, and the thioester is attacked by a nucleophilic inorganic phosphate to produce BPG. The sequence is that of Glyceraldehyde-3-phosphate dehydrogenase (gap) from Clostridium pasteurianum.